The following is a 267-amino-acid chain: X-box-binding protein 1 (267 aa).

At 1–180 (MVVVAAAPSA…VQAQLSPPQN (180 aa)) the chain is on the cytoplasmic side. Residues 35 to 60 (VPGPRAAGSEASGTPQARKRQRLTHL) are disordered. Ser-61 is subject to Phosphoserine. Residues 63–126 (EEKALRRKLK…HGLVIENQEL (64 aa)) enclose the bZIP domain. Residues 65 to 87 (KALRRKLKNRVAAQTARDRKKAR) form a basic motif region. The segment at 69-85 (RKLKNRVAAQTARDRKK) is nuclear localization signal (NLS). A leucine-zipper region spans residues 91-126 (LEQQVVDLEEENQKLQLENQLLREKTHGLVIENQEL). Residues 181-198 (IFPWILTLLPLQILSLIS) traverse the membrane as a helical; Signal-anchor for type II membrane protein segment. Topologically, residues 199–267 (FWAFWTSWTL…FVLTMYTPSL (69 aa)) are lumenal.

Belongs to the bZIP family. Isoform 1 interacts with HM13. Isoform 1 interacts with RNF139; the interaction induces ubiquitination and degradation of isoform 1. Isoform 1 interacts (via luminal domain) with DERL1; the interaction obviates the need for ectodomain shedding prior HM13/SPP-mediated XBP1 isoform 1 cleavage. Isoform 1 interacts with HDAC3 and AKT1; the interactions occur in endothelial cell (EC) under disturbed flow. Isoform 1 interacts with the oncoprotein FOS. Interacts with SIRT1. Isoform 1 is ubiquitinated, leading to proteasome-mediated degradation in response to ER stress. In terms of processing, X-box-binding protein 1, cytoplasmic form and luminal form are produced by intramembrane proteolytic cleavage of ER membrane-anchored isoform 1 triggered by HM13/SPP in a DERL1-RNF139-dependent and VCP/p97-independent manner. X-box-binding protein 1, luminal form is ubiquitinated leading to proteasomal degradation. Post-translationally, acetylated by EP300; acetylation positively regulates the transcriptional activity of XBP1. Deacetylated by SIRT1; deacetylation negatively regulates the transcriptional activity of XBP1.

The protein resides in the nucleus. The protein localises to the endoplasmic reticulum. It is found in the cytoplasm. Its subcellular location is the endoplasmic reticulum membrane. It localises to the membrane. Its function is as follows. Functions as a transcription factor during endoplasmic reticulum (ER) stress by regulating the unfolded protein response (UPR). Required for cardiac myogenesis and hepatogenesis during embryonic development, and the development of secretory tissues such as exocrine pancreas and salivary gland. Involved in terminal differentiation of B lymphocytes to plasma cells and production of immunoglobulins. Modulates the cellular response to ER stress in a PIK3R-dependent manner. Binds to the cis-acting X box present in the promoter regions of major histocompatibility complex class II genes. Involved in VEGF-induced endothelial cell (EC) proliferation and retinal blood vessel formation during embryonic development but also for angiogenesis in adult tissues under ischemic conditions. Functions also as a major regulator of the UPR in obesity-induced insulin resistance and type 2 diabetes for the management of obesity and diabetes prevention. In terms of biological role, acts as a weak transcriptional factor. Together with HDAC3, contributes to the activation of NFE2L2-mediated HMOX1 transcription factor gene expression in a PI(3)K/mTORC2/Akt-dependent signaling pathway leading to EC survival under disturbed flow/oxidative stress. Binds to the ER stress response element (ERSE) upon ER stress. Binds to the consensus 5'-GATGACGTG[TG]N(3)[AT]T-3' sequence related to cAMP responsive element (CRE)-like sequences. Associates preferentially to the HDAC3 gene promoter region in a static flow-dependent manner. Binds to the CDH5/VE-cadherin gene promoter region. The chain is X-box-binding protein 1 from Rattus norvegicus (Rat).